Reading from the N-terminus, the 222-residue chain is MTRIKICGITTLEDALAAVEAGAHALGFNFSTTSPRAVTPQTARSIISAIPPFITTTGIFVEQSPDEINSICERCNLHCAQLHSEAYDAQSSLAVSAPSIIRVFRAGPSFHMDQVRSYAGKTGIRNFLFDAFREGQPGGTGESIEDTTAIRIFKETASIGSAILAGGLKPENVGRAIRLVSPYAVDTASGVESVPGRKDHDKIRAFVRAVQEADNDSSSPEA.

It belongs to the TrpF family.

It carries out the reaction N-(5-phospho-beta-D-ribosyl)anthranilate = 1-(2-carboxyphenylamino)-1-deoxy-D-ribulose 5-phosphate. Its pathway is amino-acid biosynthesis; L-tryptophan biosynthesis; L-tryptophan from chorismate: step 3/5. This chain is N-(5'-phosphoribosyl)anthranilate isomerase, found in Prosthecochloris aestuarii (strain DSM 271 / SK 413).